Consider the following 203-residue polypeptide: dITP/XTP pyrophosphatase (203 aa).

8-13 is a binding site for substrate; sequence TANKGK. Residues glutamate 41 and aspartate 70 each contribute to the Mg(2+) site. Aspartate 70 (proton acceptor) is an active-site residue. Residues serine 71, 153–156, lysine 176, and 181–182 each bind substrate; these read FGYD and HR.

It belongs to the HAM1 NTPase family. In terms of assembly, homodimer. It depends on Mg(2+) as a cofactor.

It catalyses the reaction XTP + H2O = XMP + diphosphate + H(+). It carries out the reaction dITP + H2O = dIMP + diphosphate + H(+). The enzyme catalyses ITP + H2O = IMP + diphosphate + H(+). Its function is as follows. Pyrophosphatase that catalyzes the hydrolysis of nucleoside triphosphates to their monophosphate derivatives, with a high preference for the non-canonical purine nucleotides XTP (xanthosine triphosphate), dITP (deoxyinosine triphosphate) and ITP. Seems to function as a house-cleaning enzyme that removes non-canonical purine nucleotides from the nucleotide pool, thus preventing their incorporation into DNA/RNA and avoiding chromosomal lesions. In Listeria monocytogenes serotype 4b (strain F2365), this protein is dITP/XTP pyrophosphatase.